A 130-amino-acid polypeptide reads, in one-letter code: Leptin receptor gene-related protein (130 aa).

Helical transmembrane passes span Leu-7 to Leu-27, Gln-32 to Ala-52, Leu-68 to Ala-88, and Gly-99 to Phe-119.

It belongs to the OB-RGRP/VPS55 family.

The protein resides in the golgi apparatus membrane. Its subcellular location is the endosome membrane. In terms of biological role, involved in protein trafficking. May be involved in the down-regulation of membrane protein levels. This Danio rerio (Zebrafish) protein is Leptin receptor gene-related protein (leprot).